We begin with the raw amino-acid sequence, 383 residues long: S-adenosylmethionine synthase (383 aa).

His15 contacts ATP. Position 17 (Asp17) interacts with Mg(2+). Glu43 contributes to the K(+) binding site. The L-methionine site is built by Glu56 and Gln99. The interval 99–109 (QSPDINQGVDR) is flexible loop. ATP contacts are provided by residues 164–166 (DAK), 230–231 (RF), Asp239, 245–246 (RK), Ala262, and Lys266. Asp239 contributes to the L-methionine binding site. Position 270 (Lys270) interacts with L-methionine.

This sequence belongs to the AdoMet synthase family. As to quaternary structure, homotetramer; dimer of dimers. The cofactor is Mg(2+). K(+) is required as a cofactor.

The protein localises to the cytoplasm. The catalysed reaction is L-methionine + ATP + H2O = S-adenosyl-L-methionine + phosphate + diphosphate. It participates in amino-acid biosynthesis; S-adenosyl-L-methionine biosynthesis; S-adenosyl-L-methionine from L-methionine: step 1/1. Catalyzes the formation of S-adenosylmethionine (AdoMet) from methionine and ATP. The overall synthetic reaction is composed of two sequential steps, AdoMet formation and the subsequent tripolyphosphate hydrolysis which occurs prior to release of AdoMet from the enzyme. The sequence is that of S-adenosylmethionine synthase from Shewanella loihica (strain ATCC BAA-1088 / PV-4).